The sequence spans 344 residues: Homoserine O-acetyltransferase (344 aa).

Catalysis depends on C142, which acts as the Acyl-thioester intermediate. The substrate site is built by K163 and S192. The active-site Proton acceptor is H235. E237 is a catalytic residue. R249 serves as a coordination point for substrate.

The protein belongs to the MetA family.

The protein localises to the cytoplasm. It carries out the reaction L-homoserine + acetyl-CoA = O-acetyl-L-homoserine + CoA. It functions in the pathway amino-acid biosynthesis; L-methionine biosynthesis via de novo pathway; O-acetyl-L-homoserine from L-homoserine: step 1/1. Its function is as follows. Transfers an acetyl group from acetyl-CoA to L-homoserine, forming acetyl-L-homoserine. This chain is Homoserine O-acetyltransferase, found in Bifidobacterium adolescentis (strain ATCC 15703 / DSM 20083 / NCTC 11814 / E194a).